The primary structure comprises 562 residues: NAD-dependent malic enzyme (562 aa).

Tyr101 (proton donor) is an active-site residue. Arg154 lines the NAD(+) pocket. Lys172 acts as the Proton acceptor in catalysis. Positions 243, 244, and 267 each coordinate a divalent metal cation. 2 residues coordinate NAD(+): Asp267 and Asn415.

Belongs to the malic enzymes family. In terms of assembly, homotetramer. Mg(2+) is required as a cofactor. It depends on Mn(2+) as a cofactor.

The catalysed reaction is (S)-malate + NAD(+) = pyruvate + CO2 + NADH. The enzyme catalyses oxaloacetate + H(+) = pyruvate + CO2. The chain is NAD-dependent malic enzyme from Shewanella pealeana (strain ATCC 700345 / ANG-SQ1).